The sequence spans 957 residues: Glycine dehydrogenase (decarboxylating) (957 aa).

Lys708 is subject to N6-(pyridoxal phosphate)lysine.

This sequence belongs to the GcvP family. As to quaternary structure, the glycine cleavage system is composed of four proteins: P, T, L and H. Pyridoxal 5'-phosphate is required as a cofactor.

The enzyme catalyses N(6)-[(R)-lipoyl]-L-lysyl-[glycine-cleavage complex H protein] + glycine + H(+) = N(6)-[(R)-S(8)-aminomethyldihydrolipoyl]-L-lysyl-[glycine-cleavage complex H protein] + CO2. In terms of biological role, the glycine cleavage system catalyzes the degradation of glycine. The P protein binds the alpha-amino group of glycine through its pyridoxal phosphate cofactor; CO(2) is released and the remaining methylamine moiety is then transferred to the lipoamide cofactor of the H protein. In Escherichia coli (strain ATCC 8739 / DSM 1576 / NBRC 3972 / NCIMB 8545 / WDCM 00012 / Crooks), this protein is Glycine dehydrogenase (decarboxylating).